The chain runs to 246 residues: tRNA (guanine-N(1)-)-methyltransferase (246 aa).

Residues Gly112 and 131–136 (IGDYVL) contribute to the S-adenosyl-L-methionine site.

Belongs to the RNA methyltransferase TrmD family. As to quaternary structure, homodimer.

It is found in the cytoplasm. The catalysed reaction is guanosine(37) in tRNA + S-adenosyl-L-methionine = N(1)-methylguanosine(37) in tRNA + S-adenosyl-L-homocysteine + H(+). Specifically methylates guanosine-37 in various tRNAs. In Thermosipho africanus (strain TCF52B), this protein is tRNA (guanine-N(1)-)-methyltransferase.